The following is a 509-amino-acid chain: Citrate synthase 3, peroxisomal (509 aa).

Active-site residues include His319, His358, and Asp414. Residues 485–509 (SKESDKLGQVATSNASRRRLAGSSV) form a disordered region. Residues 500–509 (SRRRLAGSSV) are compositionally biased toward basic residues.

The protein belongs to the citrate synthase family. Widely expressed. Expressed throughout the shoot. Expressed in flower, silique, stem, cauline leaf, young leaf, mature leaf and senescent leaf.

Its subcellular location is the peroxisome. The enzyme catalyses oxaloacetate + acetyl-CoA + H2O = citrate + CoA + H(+). It functions in the pathway carbohydrate metabolism; tricarboxylic acid cycle; isocitrate from oxaloacetate: step 1/2. Peroxisomal citrate synthase required for the fatty acid respiration in seedlings, citrate being exported from peroxisomes into mitochondria during respiration of triacylglycerol (TAG). Indeed, complete respiration requires the transfer of carbon in the form of citrate from the peroxisome to the mitochondria. The chain is Citrate synthase 3, peroxisomal (CSY3) from Arabidopsis thaliana (Mouse-ear cress).